Reading from the N-terminus, the 70-residue chain is Conotoxin Cl9.1 (70 aa).

The signal sequence occupies residues 1–20 (MMGKLGVVLFICLVLFPLET). Residues 21–50 (LQLEGGQQADRHVDQLEGNPNRETRTIEVR) constitute a propeptide that is removed on maturation. 3 disulfide bridges follow: Cys51–Cys63, Cys56–Cys67, and Cys61–Cys70.

Belongs to the conotoxin M superfamily. As to expression, expressed by the venom duct.

Its subcellular location is the secreted. The polypeptide is Conotoxin Cl9.1 (Californiconus californicus (California cone)).